The sequence spans 298 residues: MSASNVSLLHETCRQVAAGGCAGLVEICLMHPLDVVKTRFQVQRSVTDPQSYKSLRDSFQVIFRTEGLFGFYKGIIPPILAETPKRAVKFSTFELYKKFLGYMSLSPGLTFPIAGLGSGLTEAVVVNPFEVVKVGLQVNRNMFTEQPSTFAYARQIIKKEGWGFQGLNKGFTATLGRHGIFNMTYFGFYYNVKDNIPSSKDPTLEFLRKFGIGFVSGTVGSVFNIPFDVAKSRIQGPQPVPGEIKYRGCFKTMETVYREEGILALYKGLLPKVMRLGPGGGVMLLVYEYTYAWLQENW.

Solcar repeat units follow at residues 10 to 99, 106 to 195, and 204 to 293; these read HETC…YKKF, SPGL…VKDN, and LEFL…TYAW. 6 helical membrane-spanning segments follow: residues 16–36, 69–88, 112–132, 166–186, 204–224, and 276–296; these read VAAGGCAGLVEICLMHPLDVV, FGFYKGIIPPILAETPKRAV, PIAGLGSGLTEAVVVNPFEVV, GLNKGFTATLGRHGIFNMTYF, LEFLRKFGIGFVSGTVGSVFN, and LGPGGGVMLLVYEYTYAWLQE.

The protein belongs to the mitochondrial carrier (TC 2.A.29) family. In terms of tissue distribution, widely expressed.

It is found in the mitochondrion inner membrane. The catalysed reaction is 2-oxoadipate(in) + 2-oxoglutarate(out) = 2-oxoadipate(out) + 2-oxoglutarate(in). It catalyses the reaction hexanedioate(in) + 2-oxoglutarate(out) = hexanedioate(out) + 2-oxoglutarate(in). The enzyme catalyses L-2-aminoadipate(in) + 2-oxoglutarate(out) = L-2-aminoadipate(out) + 2-oxoglutarate(in). It carries out the reaction glutarate(in) + 2-oxoglutarate(out) = glutarate(out) + 2-oxoglutarate(in). The catalysed reaction is 2-oxoheptanedioate(in) + 2-oxoglutarate(out) = 2-oxoheptanedioate(out) + 2-oxoglutarate(in). It catalyses the reaction heptanedioate(in) + 2-oxoglutarate(out) = heptanedioate(out) + 2-oxoglutarate(in). The enzyme catalyses citrate(in) + 2-oxoglutarate(out) = citrate(out) + 2-oxoglutarate(in). In terms of biological role, transports dicarboxylates across the inner membranes of mitochondria by a counter-exchange mechanism. Can transport 2-oxoadipate (2-oxohexanedioate), 2-oxoglutarate, adipate (hexanedioate), glutarate, and to a lesser extent, pimelate (heptanedioate), 2-oxopimelate (2-oxoheptanedioate), 2-aminoadipate (2-aminohexanedioate), oxaloacetate, and citrate. Plays a central role in catabolism of lysine, hydroxylysine, and tryptophan, by transporting common metabolite intermediates (such as 2-oxoadipate) into the mitochondria, where it is converted into acetyl-CoA and can enter the citric acid (TCA) cycle. The chain is Mitochondrial 2-oxodicarboxylate carrier (Slc25a21) from Rattus norvegicus (Rat).